We begin with the raw amino-acid sequence, 289 residues long: Phytoene synthase (289 aa).

Belongs to the phytoene/squalene synthase family. It depends on ATP as a cofactor. The cofactor is Mn(2+). Mg(2+) is required as a cofactor.

The protein operates within carotenoid biosynthesis; phytoene biosynthesis. In terms of biological role, involved in the biosynthesis of carotenoids. Catalyzes the condensation of two molecules of geranylgeranyl diphosphate (GGPP) to give prephytoene diphosphate (PPPP) and the subsequent rearrangement of the cyclopropylcarbinyl intermediate to yield phytoene. The sequence is that of Phytoene synthase (crtB) from Thermus thermophilus (strain ATCC BAA-163 / DSM 7039 / HB27).